The following is a 366-amino-acid chain: uncharacterized protein (366 aa).

6 helical membrane passes run Ile-164 to Ile-184, Ile-188 to Leu-208, Val-223 to Leu-243, Phe-256 to Met-276, Phe-299 to Leu-319, and Phe-325 to Ile-345.

This sequence to A.fulgidus AF2058.

It is found in the cell membrane. This is an uncharacterized protein from Methanocaldococcus jannaschii (strain ATCC 43067 / DSM 2661 / JAL-1 / JCM 10045 / NBRC 100440) (Methanococcus jannaschii).